Here is a 309-residue protein sequence, read N- to C-terminus: Sporulation sigma-E factor-processing peptidase (309 aa).

5 consecutive transmembrane segments (helical) span residues 7–27 (VIWLLNFCFDALLLLLTAFIL), 36–55 (LVGGAFIGSSIVLLMFTPFS), 61–78 (PAGKLAFSVVIVVVTFGF), 88–105 (LFSFYFATFLMGGGIIGA), and 130–147 (PISWLFIVGGFPALWFFS). The active site involves D183.

The protein belongs to the peptidase U4 family. As to quaternary structure, self-associates. Interacts with SigE. Interacts with SpoIIR.

The protein localises to the cell membrane. Its function is as follows. Probable aspartic protease that is responsible for the proteolytic cleavage of the RNA polymerase sigma E factor (SigE/spoIIGB) to yield the active peptide in the mother cell during sporulation. Responds to a signal from the forespore that is triggered by the extracellular signal protein SpoIIR. The sequence is that of Sporulation sigma-E factor-processing peptidase (spoIIGA) from Bacillus subtilis (strain 168).